We begin with the raw amino-acid sequence, 425 residues long: Fe(2+) transport protein 3, chloroplastic (425 aa).

Residues 65 to 85 (FVAIASILLAGAAGVTIPLIG) form a helical membrane-spanning segment. Over 86–97 (RNRRFLQTDGNL) the chain is Cytoplasmic. Residues 98–118 (FVTAKAFAAGVILATGFVHML) form a helical membrane-spanning segment. Residues 119 to 137 (AGGTEALKNPCLPDFPWSK) are Lumenal-facing. The helical transmembrane segment at 138–158 (FPFPGFFAMIAALITLFVDFM) threads the bilayer. Over 159–269 (GTQYYERKQE…GLDAVNGARH (111 aa)) the chain is Cytoplasmic. The helical transmembrane segment at 270–290 (IVVSQVLELGIVSHSIIIGLS) threads the bilayer. Topologically, residues 291–301 (LGVSQSPCTIR) are lumenal. The chain crosses the membrane as a helical span at residues 302-322 (PLIAALSFHQFFEGFALGGCI). At 323–333 (SQAQFRNKSAT) the chain is on the cytoplasmic side. Residues 334–354 (IMACFFALTTPIGIGIGTAVA) form a helical membrane-spanning segment. Residues 355 to 369 (SSFNSHSVGALVTEG) lie on the Lumenal side of the membrane. A helical transmembrane segment spans residues 370–390 (ILDSLSAGILVYMALVDLIAA). The Cytoplasmic segment spans residues 391–404 (DFLSTKMRCNFRLQ). A helical membrane pass occupies residues 405-425 (IVSYVMLFLGAGLMSSLAIWA).

It belongs to the ZIP transporter (TC 2.A.5) family.

It localises to the plastid. The protein localises to the chloroplast thylakoid membrane. May play a role in the transport of iron in the plastids. The chain is Fe(2+) transport protein 3, chloroplastic (IRT3) from Arabidopsis thaliana (Mouse-ear cress).